Consider the following 62-residue polypeptide: VNVLGGIEYSINNATLCSVGFSVRVFNYAEGAVRGLTQGNACMGRGDSGGSWFTLFERQYGL.

The active-site Charge relay system is the Ser-48.

This sequence belongs to the peptidase S1 family. As to quaternary structure, monomer.

The protein localises to the secreted. It carries out the reaction Preferential cleavage: Ala-|-Xaa, Val-|-Xaa in bacterial cell walls, elastin and other proteins.. Inhibited by phenylmethanesulfonyl fluoride (PMSF) and p-chloromercuribenzoate (PCMB). In terms of biological role, has bacteriolytic activity. This Lysobacter sp. (strain XL1) protein is Alpha-lytic protease L1.